We begin with the raw amino-acid sequence, 1070 residues long: Phosphatidylinositol 4,5-bisphosphate 3-kinase catalytic subunit beta isoform (1070 aa).

The 90-residue stretch at 26 to 115 (SDGSISVDFL…LPVLKLVTRS (90 aa)) folds into the PI3K-ABD domain. A PI3K-RBD domain is found at 194–285 (GGKLVVAVHF…RTLPHFILVE (92 aa)). A Phosphoserine modification is found at Ser324. A C2 PI3K-type domain is found at 327–496 (WGNNNPFQIV…NATALHIKFP (170 aa)). The Nuclear localization signal (NLS) signature appears at 410–418 (KVKTKKSTK). Residues 524-701 (ANVSSRGGKK…GVILEAYCRG (178 aa)) form the PIK helical domain. The PI3K/PI4K catalytic domain occupies 772–1053 (YVEKCRYMDS…KFDEALRESW (282 aa)). The interval 778–784 (YMDSKMK) is G-loop. A catalytic loop region spans residues 916 to 924 (GIGDRHSDN). The segment at 935–961 (HIDFGHILGNFKSKFGIKRERVPFILT) is activation loop. Residue Ser1070 is modified to Phosphoserine; by autocatalysis.

It belongs to the PI3/PI4-kinase family. As to quaternary structure, heterodimer of a catalytic subunit PIK3CB and a p85 regulatory subunit (PIK3R1, PIK3R2 or PIK3R3). Interaction with PIK3R2 is required for nuclear localization and nuclear export. Part of a complex with PIK3R1 and PTEN. Binding to PTEN may antagonize the lipid kinase activity under normal growth conditions. Part of a complex involved in autophagosome formation composed of PIK3C3 and PIK3R4. Interacts with BECN1, ATG14 and RAB5A. In terms of processing, autophosphorylation at Ser-1070 negatively regulates the phosphatidylinositol-4,5-bisphosphate 3-kinase activity.

It is found in the cytoplasm. The protein localises to the nucleus. It carries out the reaction a 1,2-diacyl-sn-glycero-3-phospho-(1D-myo-inositol-4,5-bisphosphate) + ATP = a 1,2-diacyl-sn-glycero-3-phospho-(1D-myo-inositol-3,4,5-trisphosphate) + ADP + H(+). The catalysed reaction is 1-octadecanoyl-2-(5Z,8Z,11Z,14Z)-eicosatetraenoyl-sn-glycero-3-phospho-1D-myo-inositol 4,5-bisphosphate + ATP = 1-octadecanoyl-2-(5Z,8Z,11Z,14Z-eicosatetraenoyl)-sn-glycero-3-phospho-(1D-myo-inositol 3,4,5-triphosphate) + ADP + H(+). The enzyme catalyses L-seryl-[protein] + ATP = O-phospho-L-seryl-[protein] + ADP + H(+). Its pathway is phospholipid metabolism; phosphatidylinositol phosphate biosynthesis. Its function is as follows. Phosphoinositide-3-kinase (PI3K) phosphorylates phosphatidylinositol (PI) derivatives at position 3 of the inositol ring to produce 3-phosphoinositides. Uses ATP and PtdIns(4,5)P2 (phosphatidylinositol 4,5-bisphosphate) to generate phosphatidylinositol 3,4,5-trisphosphate (PIP3). PIP3 plays a key role by recruiting PH domain-containing proteins to the membrane, including AKT1 and PDPK1, activating signaling cascades involved in cell growth, survival, proliferation, motility and morphology. Involved in the activation of AKT1 upon stimulation by G-protein coupled receptors (GPCRs) ligands such as CXCL12, sphingosine 1-phosphate, and lysophosphatidic acid. May also act downstream receptor tyrosine kinases. Required in different signaling pathways for stable platelet adhesion and aggregation. Plays a role in platelet activation signaling triggered by GPCRs, alpha-IIb/beta-3 integrins (ITGA2B/ ITGB3) and ITAM (immunoreceptor tyrosine-based activation motif)-bearing receptors such as GP6. Regulates the strength of adhesion of ITGA2B/ ITGB3 activated receptors necessary for the cellular transmission of contractile forces. Required for platelet aggregation induced by F2 (thrombin) and thromboxane A2 (TXA2). Has a role in cell survival. May have a role in cell migration. Involved in the early stage of autophagosome formation. Modulates the intracellular level of PtdIns3P (phosphatidylinositol 3-phosphate) and activates PIK3C3 kinase activity. May act as a scaffold, independently of its lipid kinase activity to positively regulate autophagy. May have a role in insulin signaling as scaffolding protein in which the lipid kinase activity is not required. May have a kinase-independent function in regulating cell proliferation and in clathrin-mediated endocytosis. Mediator of oncogenic signal in cell lines lacking PTEN. The lipid kinase activity is necessary for its role in oncogenic transformation. Required for the growth of ERBB2 and RAS driven tumors. Also has a protein kinase activity showing autophosphorylation. The protein is Phosphatidylinositol 4,5-bisphosphate 3-kinase catalytic subunit beta isoform (Pik3cb) of Rattus norvegicus (Rat).